We begin with the raw amino-acid sequence, 344 residues long: MNSITLLQPDDWHAHLRDGLALKRTVPDLAKQFARAICMPNLVPPVKTVEEALAYRERILAHVPEGNNFDPRMVLYFTDHTSPDEVRKIKESEHVNAIKLYPAGATTNSDNGVSDIRKVYAVIEQLEEHQVPLLLHGEVTHNHVDIFDREKRFLDEVLSPLLKQFPKLKVVLEHITTSDAAHFVLEQDRNVAATITPQHLLFNRNDMLVGGIKPHFYCLPILKRQTHQTTLLEVATSGNPKFFLGTDSAPHAQNAKENACGCAGCYSAPNAIELYAQAFDQVGKLERLEGFASHFGADFYGLPRNTSTITLVKEDNLVPESFDYLDNQKIIPLHAGKTLQWRKV.

2 residues coordinate Zn(2+): histidine 13 and histidine 15. Substrate is bound by residues 15 to 17 (HLR) and asparagine 41. Zn(2+)-binding residues include lysine 99, histidine 136, and histidine 174. Lysine 99 is subject to N6-carboxylysine. Residue histidine 136 coordinates substrate. Leucine 219 provides a ligand contact to substrate. Residue aspartate 247 coordinates Zn(2+). The active site involves aspartate 247. Substrate-binding residues include histidine 251 and alanine 263.

It belongs to the metallo-dependent hydrolases superfamily. DHOase family. Class II DHOase subfamily. Homodimer. Requires Zn(2+) as cofactor.

The catalysed reaction is (S)-dihydroorotate + H2O = N-carbamoyl-L-aspartate + H(+). It participates in pyrimidine metabolism; UMP biosynthesis via de novo pathway; (S)-dihydroorotate from bicarbonate: step 3/3. In terms of biological role, catalyzes the reversible cyclization of carbamoyl aspartate to dihydroorotate. This is Dihydroorotase from Acinetobacter baumannii (strain AB307-0294).